A 312-amino-acid chain; its full sequence is tRNA dimethylallyltransferase (312 aa).

10 to 17 (GPTASGKS) contributes to the ATP binding site. Residue 12–17 (TASGKS) participates in substrate binding. The interaction with substrate tRNA stretch occupies residues 35-38 (DSKQ).

This sequence belongs to the IPP transferase family. Monomer. Requires Mg(2+) as cofactor.

The enzyme catalyses adenosine(37) in tRNA + dimethylallyl diphosphate = N(6)-dimethylallyladenosine(37) in tRNA + diphosphate. Its function is as follows. Catalyzes the transfer of a dimethylallyl group onto the adenine at position 37 in tRNAs that read codons beginning with uridine, leading to the formation of N6-(dimethylallyl)adenosine (i(6)A). This chain is tRNA dimethylallyltransferase, found in Anaplasma phagocytophilum (strain HZ).